A 341-amino-acid polypeptide reads, in one-letter code: tRNA N6-adenosine threonylcarbamoyltransferase (341 aa).

2 residues coordinate Fe cation: His-112 and His-116. Residues 138–142 (TVSGG), Asp-171, Gly-184, Asp-188, and Asn-279 contribute to the substrate site. Asp-307 provides a ligand contact to Fe cation.

Belongs to the KAE1 / TsaD family. The cofactor is Fe(2+).

It localises to the cytoplasm. It catalyses the reaction L-threonylcarbamoyladenylate + adenosine(37) in tRNA = N(6)-L-threonylcarbamoyladenosine(37) in tRNA + AMP + H(+). In terms of biological role, required for the formation of a threonylcarbamoyl group on adenosine at position 37 (t(6)A37) in tRNAs that read codons beginning with adenine. Is involved in the transfer of the threonylcarbamoyl moiety of threonylcarbamoyl-AMP (TC-AMP) to the N6 group of A37, together with TsaE and TsaB. TsaD likely plays a direct catalytic role in this reaction. This is tRNA N6-adenosine threonylcarbamoyltransferase from Riemerella anatipestifer (Moraxella anatipestifer).